A 179-amino-acid polypeptide reads, in one-letter code: Tetratricopeptide repeat protein 36 (179 aa).

3 TPR repeats span residues Ser-43 to Asn-76, Pro-77 to Lys-110, and Cys-115 to Phe-148.

It belongs to the TTC36 family.

The sequence is that of Tetratricopeptide repeat protein 36 from Caenorhabditis briggsae.